A 2705-amino-acid polypeptide reads, in one-letter code: Teneurin-1 (2705 aa).

Disordered regions lie at residues 1–73 (MEQM…STQD) and 135–222 (CLSS…TQDS). The 299-residue stretch at 1–299 (MEQMDCKPYQ…KPYRCCNWKC (299 aa)) folds into the Teneurin N-terminal domain. The Cytoplasmic segment spans residues 1-305 (MEQMDCKPYQ…NWKCTALSAT (305 aa)). Basic and acidic residues predominate over residues 32-46 (DGRKQRQSYDSRETL). Positions 62-65 (RKRK) match the Nuclear localization signal (NLS) motif. Over residues 135–147 (CLSSRANSALSLT) the composition is skewed to polar residues. Over residues 148–157 (DTDHERKSDG) the composition is skewed to basic and acidic residues. Over residues 173–182 (PLPPPPPPPH) the composition is skewed to pro residues. The short motif at 271–278 (PPPRPLPR) is the Required for interaction with SORBS1 (Ten-1 ICD form) element. The chain crosses the membrane as a helical span at residues 306–326 (AITVTLALLLAYVIAVHLFGL). The Extracellular segment spans residues 327–2705 (TWQLQPVEGQ…FMRQSEIGRR (2379 aa)). An N-linked (GlcNAc...) asparagine glycan is attached at Asn414. EGF-like domains lie at 509–540 (VLDD…PDCA), 541–572 (KDSC…ECDV), 573–605 (PEEQ…EICE), 606–638 (EEDC…NCET), 639–672 (SLPI…SDCS), 673–702 (TELC…GPTC), 703–734 (EERT…DHCT), and 735–769 (IDGC…SGCN). Disulfide bonds link Cys513–Cys523, Cys517–Cys528, Cys530–Cys539, Cys548–Cys559, Cys561–Cys570, Cys577–Cys588, Cys582–Cys593, Cys595–Cys604, Cys609–Cys620, Cys614–Cys625, Cys627–Cys636, Cys647–Cys660, Cys662–Cys671, Cys676–Cys686, Cys680–Cys691, Cys693–Cys702, Cys707–Cys717, Cys711–Cys722, Cys724–Cys733, Cys738–Cys748, Cys742–Cys757, and Cys759–Cys768. 2 N-linked (GlcNAc...) asparagine glycosylation sites follow: Asn878 and Asn1057. NHL repeat units lie at residues 1167–1192 (LFAP…VRRI), 1202–1246 (LELR…AKSL), 1272–1316 (SHCG…NGMI), 1331–1382 (LSCD…IAGR), and 1461–1504 (CFSG…VSRN). The stretch at 1514–1533 (YEIASPADQELYQFTINGTH) is one YD 1 repeat. 2 N-linked (GlcNAc...) asparagine glycosylation sites follow: Asn1530 and Asn1547. 4 YD repeats span residues 1550–1570 (YSGE…VHIR), 1588–1612 (YWLT…ALMT), 1613–1634 (YPGN…TVYE), and 1635–1655 (YDSD…SSFH). Residues Asn1643, Asn1679, Asn1737, Asn1761, and Asn1822 are each glycosylated (N-linked (GlcNAc...) asparagine). 11 YD repeats span residues 1825–1844 (YSHS…EKME), 1845–1865 (YDPS…WSYT), 1866–1884 (YLEK…YIFE), 1885–1905 (YDQS…HALQ), 1913–1929 (YRNI…FIQD), 1930–1949 (VTRD…RRVL), 1950–1969 (YKYS…TQVT), 1972–1992 (YEES…FICT), 1995–2015 (YRQT…EGLV), 2065–2085 (YDLN…FSAN), and 2093–2113 (YEIL…MGRM). The N-linked (GlcNAc...) asparagine glycan is linked to Asn2125. YD repeat units follow at residues 2133 to 2153 (YDRD…WRYS), 2154 to 2174 (YDLN…LTPL), 2176 to 2196 (YDLR…DEDG), 2208 to 2228 (YNSN…TVQY), and 2230 to 2250 (YDGL…LQFF). N-linked (GlcNAc...) asparagine glycosylation is present at Asn2265. YD repeat units follow at residues 2276 to 2293 (YDLQ…GEEY) and 2294 to 2317 (YVAC…IKEI). Asn2582 carries an N-linked (GlcNAc...) asparagine glycan.

This sequence belongs to the tenascin family. Teneurin subfamily. Homodimer; disulfide-linked. Heterodimer with other teneurins. Ten-1 ICD interacts with SORBS1 (via third SH3 domain). Interacts with MBD1 isoform 2. Derives from the plasma membrane form by proteolytic processing. Further proteolytic cleavage may be generated. In terms of processing, derives from the plasma membrane form by proteolytic cleavage and translocates to the nucleus. As to expression, expressed in the neurons of the developing visual system and in fetal brain.

The protein localises to the cell membrane. It localises to the nucleus. The protein resides in the nucleus speckle. It is found in the nucleus matrix. Its subcellular location is the cytoplasm. The protein localises to the cytoskeleton. Its function is as follows. Involved in neural development, regulating the establishment of proper connectivity within the nervous system. May function as a cellular signal transducer. Functionally, plays a role in the regulation of neuroplasticity in the limbic system. Mediates a rapid reorganization of actin- and tubulin-based cytoskeleton elements with an increase in dendritic arborization and spine density formation of neurons in the hippocampus and amygdala. Induces BDNF transcription inhibition in neurons. Activates the mitogen-activated protein (MAP) kinase 2 (MEK2) and extracellular signal-regulated kinase (ERK) cascade. In terms of biological role, induces gene transcription activation. This is Teneurin-1 (TENM1) from Gallus gallus (Chicken).